Here is a 239-residue protein sequence, read N- to C-terminus: Fatty acid metabolism regulator protein (239 aa).

Positions 6–74 (QSPAGFAEEY…HGKPTKVNNF (69 aa)) constitute an HTH gntR-type domain. Positions 34–53 (ERELSELIGVTRTTLREVLQ) form a DNA-binding region, H-T-H motif.

As to quaternary structure, homodimer.

It localises to the cytoplasm. Multifunctional regulator of fatty acid metabolism. The chain is Fatty acid metabolism regulator protein from Yersinia pseudotuberculosis serotype O:1b (strain IP 31758).